The sequence spans 368 residues: Histidinol-phosphate aminotransferase (368 aa).

Lys223 carries the N6-(pyridoxal phosphate)lysine modification.

This sequence belongs to the class-II pyridoxal-phosphate-dependent aminotransferase family. Histidinol-phosphate aminotransferase subfamily. Homodimer. Pyridoxal 5'-phosphate is required as a cofactor.

It catalyses the reaction L-histidinol phosphate + 2-oxoglutarate = 3-(imidazol-4-yl)-2-oxopropyl phosphate + L-glutamate. The protein operates within amino-acid biosynthesis; L-histidine biosynthesis; L-histidine from 5-phospho-alpha-D-ribose 1-diphosphate: step 7/9. In Rhodospirillum rubrum (strain ATCC 11170 / ATH 1.1.1 / DSM 467 / LMG 4362 / NCIMB 8255 / S1), this protein is Histidinol-phosphate aminotransferase.